A 368-amino-acid polypeptide reads, in one-letter code: uncharacterized protein (368 aa).

5 helical membrane-spanning segments follow: residues 22–42, 74–94, 104–124, 144–164, and 168–188; these read VAGI…FTLI, FVKP…LLVL, FLKT…LNLF, VGDF…GASL, and WGVN…AVSL.

Belongs to the MscS (TC 1.A.23) family.

The protein localises to the cell membrane. This is an uncharacterized protein from Aquifex aeolicus (strain VF5).